The following is a 230-amino-acid chain: Large ribosomal subunit protein uL3 (230 aa).

2 disordered regions span residues 125–149 (QAIGPRSHGGGGGSKPIRQTGSLGD) and 210–230 (PNPKNPVSLFVPNSDKEVKNE).

The protein belongs to the universal ribosomal protein uL3 family. In terms of assembly, part of the 50S ribosomal subunit. Forms a cluster with proteins L14 and L19.

One of the primary rRNA binding proteins, it binds directly near the 3'-end of the 23S rRNA, where it nucleates assembly of the 50S subunit. The polypeptide is Large ribosomal subunit protein uL3 (Mesomycoplasma hyopneumoniae (strain 232) (Mycoplasma hyopneumoniae)).